The sequence spans 61 residues: uncharacterized protein (61 aa).

This is an uncharacterized protein from Bacillus subtilis (strain 168).